We begin with the raw amino-acid sequence, 226 residues long: Ribonuclease 3 (226 aa).

Residues 6-128 (TKKIQKVLGY…LIGSIYLDSN (123 aa)) enclose the RNase III domain. Position 41 (Glu-41) interacts with Mg(2+). Asp-45 is an active-site residue. Residues Asn-114 and Glu-117 each coordinate Mg(2+). Glu-117 is a catalytic residue. In terms of domain architecture, DRBM spans 155–225 (DPKTRLQEYL…AQKALIKLGV (71 aa)).

The protein belongs to the ribonuclease III family. In terms of assembly, homodimer. Mg(2+) serves as cofactor.

The protein resides in the cytoplasm. It carries out the reaction Endonucleolytic cleavage to 5'-phosphomonoester.. Its function is as follows. Digests double-stranded RNA. Involved in the processing of primary rRNA transcript to yield the immediate precursors to the large and small rRNAs (23S and 16S). Processes some mRNAs, and tRNAs when they are encoded in the rRNA operon. Processes pre-crRNA and tracrRNA of type II CRISPR loci if present in the organism. This Buchnera aphidicola subsp. Acyrthosiphon pisum (strain 5A) protein is Ribonuclease 3.